The primary structure comprises 35 residues: RCHFVVCTTDCRRNSPGTYGECVKKEKGKECVCKS.

Disulfide bonds link Cys2-Cys22, Cys7-Cys31, and Cys11-Cys33.

As to expression, expressed by the venom gland.

It localises to the secreted. Blocks Kv1.6/KCNA6 potassium channels. The sequence is that of Tamulustoxin from Hottentotta tamulus (Eastern Indian scorpion).